The following is a 500-amino-acid chain: Glucose-6-phosphate 1-dehydrogenase (500 aa).

NADP(+) is bound by residues 18 to 25 (GASGDLSK), arginine 52, and lysine 155. Residues lysine 155, 185 to 189 (HYLGK), glutamate 223, and aspartate 242 each bind D-glucose 6-phosphate. Histidine 247 functions as the Proton acceptor in the catalytic mechanism. An NADP(+)-binding site is contributed by lysine 338. Lysine 341 contacts D-glucose 6-phosphate. NADP(+) is bound by residues lysine 347, arginine 351, and arginine 373. D-glucose 6-phosphate is bound at residue glutamine 375. NADP(+) is bound by residues 381–383 (YFK), 401–403 (DLT), and tyrosine 483.

It belongs to the glucose-6-phosphate dehydrogenase family.

It localises to the cytoplasm. The protein resides in the cytosol. The catalysed reaction is D-glucose 6-phosphate + NADP(+) = 6-phospho-D-glucono-1,5-lactone + NADPH + H(+). The protein operates within carbohydrate degradation; pentose phosphate pathway; D-ribulose 5-phosphate from D-glucose 6-phosphate (oxidative stage): step 1/3. In terms of biological role, catalyzes the rate-limiting step of the oxidative pentose-phosphate pathway, which represents a route for the dissimilation of carbohydrates besides glycolysis. The main function of this enzyme is to provide reducing power (NADPH) and pentose phosphates for fatty acid and nucleic acid synthesis. The chain is Glucose-6-phosphate 1-dehydrogenase from Schizosaccharomyces pombe (strain 972 / ATCC 24843) (Fission yeast).